The primary structure comprises 310 residues: Homoserine kinase (310 aa).

ATP is bound at residue 91–101; it reads PIGSGLGSSAC.

This sequence belongs to the GHMP kinase family. Homoserine kinase subfamily.

It is found in the cytoplasm. The enzyme catalyses L-homoserine + ATP = O-phospho-L-homoserine + ADP + H(+). It participates in amino-acid biosynthesis; L-threonine biosynthesis; L-threonine from L-aspartate: step 4/5. Its function is as follows. Catalyzes the ATP-dependent phosphorylation of L-homoserine to L-homoserine phosphate. In Escherichia coli (strain SE11), this protein is Homoserine kinase.